A 354-amino-acid chain; its full sequence is Major egg antigen (354 aa).

The tract at residues 1–21 (MSGGKQHNAVSIPVNREQRSF) is disordered. 2 sHSP domains span residues 122–233 (SVND…VAVR) and 251–354 (AKGV…AITH).

The protein belongs to the small heat shock protein (HSP20) family.

The protein is Major egg antigen of Schistosoma mansoni (Blood fluke).